The primary structure comprises 117 residues: DNA-directed RNA polymerase II subunit RPB11 (117 aa).

This sequence belongs to the archaeal Rpo11/eukaryotic RPB11/RPC19 RNA polymerase subunit family. In terms of assembly, component of the RNA polymerase II (Pol II) complex consisting of 12 subunits.

Its subcellular location is the nucleus. DNA-dependent RNA polymerase catalyzes the transcription of DNA into RNA using the four ribonucleoside triphosphates as substrates. Component of RNA polymerase II which synthesizes mRNA precursors and many functional non-coding RNAs. Pol II is the central component of the basal RNA polymerase II transcription machinery. It is composed of mobile elements that move relative to each other. RPB11 is part of the core element with the central large cleft. This Drosophila melanogaster (Fruit fly) protein is DNA-directed RNA polymerase II subunit RPB11.